A 143-amino-acid polypeptide reads, in one-letter code: Fluoride-specific ion channel FluC 1 (143 aa).

The next 4 membrane-spanning stretches (helical) occupy residues 13–33, 42–62, 80–100, and 111–131; these read VLVGLVFLGGCLGTLIRSVIA, GVPWGTLAINLVGAFVLATLL, LCIGTGLLGGFTTYSALTVEA, and WGIAYLLTSVAAGALLAWVVI. Residues Gly-88 and Thr-91 each coordinate Na(+).

Belongs to the fluoride channel Fluc/FEX (TC 1.A.43) family.

It localises to the cell membrane. It carries out the reaction fluoride(in) = fluoride(out). Na(+) is not transported, but it plays an essential structural role and its presence is essential for fluoride channel function. Functionally, fluoride-specific ion channel. Important for reducing fluoride concentration in the cell, thus reducing its toxicity. This chain is Fluoride-specific ion channel FluC 1, found in Cutibacterium acnes (strain DSM 16379 / KPA171202) (Propionibacterium acnes).